Here is a 72-residue protein sequence, read N- to C-terminus: Translation initiation factor IF-1 (72 aa).

One can recognise an S1-like domain in the interval 2–72; it reads AKEDVIEIQG…TKGRITYRFK (71 aa).

The protein belongs to the IF-1 family. As to quaternary structure, component of the 30S ribosomal translation pre-initiation complex which assembles on the 30S ribosome in the order IF-2 and IF-3, IF-1 and N-formylmethionyl-tRNA(fMet); mRNA recruitment can occur at any time during PIC assembly.

The protein localises to the cytoplasm. In terms of biological role, one of the essential components for the initiation of protein synthesis. Stabilizes the binding of IF-2 and IF-3 on the 30S subunit to which N-formylmethionyl-tRNA(fMet) subsequently binds. Helps modulate mRNA selection, yielding the 30S pre-initiation complex (PIC). Upon addition of the 50S ribosomal subunit IF-1, IF-2 and IF-3 are released leaving the mature 70S translation initiation complex. The chain is Translation initiation factor IF-1 from Lactiplantibacillus plantarum (strain ATCC BAA-793 / NCIMB 8826 / WCFS1) (Lactobacillus plantarum).